We begin with the raw amino-acid sequence, 470 residues long: Cysteine--tRNA ligase (470 aa).

Residue Cys27 participates in Zn(2+) binding. Positions Pro29–Asn39 match the 'HIGH' region motif. Residues Cys211, His236, and Glu240 each contribute to the Zn(2+) site. The 'KMSKS' region motif lies at Lys268–Ser272. Lys271 contacts ATP.

It belongs to the class-I aminoacyl-tRNA synthetase family. Monomer. It depends on Zn(2+) as a cofactor.

It is found in the cytoplasm. It carries out the reaction tRNA(Cys) + L-cysteine + ATP = L-cysteinyl-tRNA(Cys) + AMP + diphosphate. The chain is Cysteine--tRNA ligase from Clostridium botulinum (strain Eklund 17B / Type B).